A 230-amino-acid chain; its full sequence is Type 4 apparatus protein DotY (230 aa).

The tract at residues 202–230 is disordered; sequence EPKALETKREEIRQEIESGAEAPTTQSIR. The span at 204–217 shows a compositional bias: basic and acidic residues; it reads KALETKREEIRQEI.

The T4BSS is a complex nanomachine composed of several subcomplexes. This subunit is part of the Type IV Coupling Complex (T4CC), a subcomplex composed of the DotLMNYZ core and the IcmSW-LvgA adapter subunits, linked by the C-terminal tail of DotL. Six DotLMNYZ hetero-pentameric units may assemble into a hexameric nanomachine, forming an inner membrane channel for effectors to pass through. Interacts exclusively with DotZ. DotY and DotZ are co-dependent for the assembly into the T4CC.

It is found in the cytoplasm. Functionally, component of the Dot/Icm type IVB secretion system (T4BSS), which is used to inject bacterial effector proteins into eukaryotic host cells. Part of a subcomplex which recruits effector proteins and delivers them to the core transmembrane subcomplex. DotY and DotZ play a role in effector translocation, but are not essential and do not influence the stability of the subcomplex main components. The DotY/DotZ main function is to optimize secretion by modulating the delivery trajectory of the IcmSW module and the localization of the machinery to the poles. The protein is Type 4 apparatus protein DotY of Legionella pneumophila subsp. pneumophila (strain Philadelphia 1 / ATCC 33152 / DSM 7513).